The sequence spans 455 residues: UDP-N-acetylmuramoylalanine--D-glutamate ligase (455 aa).

ATP is bound at residue 120 to 126 (GSNGKTT).

This sequence belongs to the MurCDEF family.

It localises to the cytoplasm. It catalyses the reaction UDP-N-acetyl-alpha-D-muramoyl-L-alanine + D-glutamate + ATP = UDP-N-acetyl-alpha-D-muramoyl-L-alanyl-D-glutamate + ADP + phosphate + H(+). The protein operates within cell wall biogenesis; peptidoglycan biosynthesis. In terms of biological role, cell wall formation. Catalyzes the addition of glutamate to the nucleotide precursor UDP-N-acetylmuramoyl-L-alanine (UMA). The sequence is that of UDP-N-acetylmuramoylalanine--D-glutamate ligase from Pediococcus pentosaceus (strain ATCC 25745 / CCUG 21536 / LMG 10740 / 183-1w).